Reading from the N-terminus, the 211-residue chain is tRNA (guanine-N(7)-)-methyltransferase (211 aa).

S-adenosyl-L-methionine contacts are provided by Glu-43, Asp-68, and Asn-117. Substrate-binding positions include Lys-121, Asp-153, and 190 to 193 (TEYE).

It belongs to the class I-like SAM-binding methyltransferase superfamily. TrmB family.

The enzyme catalyses guanosine(46) in tRNA + S-adenosyl-L-methionine = N(7)-methylguanosine(46) in tRNA + S-adenosyl-L-homocysteine. Its pathway is tRNA modification; N(7)-methylguanine-tRNA biosynthesis. Functionally, catalyzes the formation of N(7)-methylguanine at position 46 (m7G46) in tRNA. The protein is tRNA (guanine-N(7)-)-methyltransferase of Clostridium acetobutylicum (strain ATCC 824 / DSM 792 / JCM 1419 / IAM 19013 / LMG 5710 / NBRC 13948 / NRRL B-527 / VKM B-1787 / 2291 / W).